The sequence spans 1024 residues: Gamma-tubulin complex component 5 (1024 aa).

2 disordered regions span residues 155–203 (IGPY…LDPC) and 521–545 (TENEEKMSDNASASSGSDQGPSSRQ). A compositionally biased stretch (basic and acidic residues) spans 189-203 (TPLEEQDQNRKLDPC). Low complexity predominate over residues 531-543 (ASASSGSDQGPSS).

This sequence belongs to the TUBGCP family. As to quaternary structure, component of the gamma-tubulin ring complex (gTuRC) consisting of TUBGCP2, TUBGCP3, TUBGCP4, TUBGCP5 and TUBGCP6 and gamma-tubulin TUBG1 or TUBG2. TUBGCP2, TUBGCP3, TUBGCP4, TUBGCP5 and TUBGCP6 assemble in a 5:5:2:1:1 stoichiometry; each is associated with a gamma-tubulin, thereby arranging 14 gamma-tubulins in a helical manner. Gamma-tubulin at the first position is blocked by TUBGCP3 at the last position, allowing 13 protafilaments to grow into a microtubule. The gTuRC (via TUBGCP3 and TUBGCP6) interacts with ACTB and MZT1; the interactions form a luminal bridge that stabilizes the initial structure during complex assembly. The gTuRC (via TUBGCP2) interacts with MZT2A/MZT2B and CDK5RAP2 (via CM1 motif); the interactions play a role in gTuRC activation. As to expression, widely expressed, with highest levels in heart and skeletal muscle and moderate levels in brain.

The protein localises to the cytoplasm. It localises to the cytoskeleton. Its subcellular location is the microtubule organizing center. It is found in the centrosome. In terms of biological role, component of the gamma-tubulin ring complex (gTuRC) which mediates microtubule nucleation. The gTuRC regulates the minus-end nucleation of alpha-beta tubulin heterodimers that grow into microtubule protafilaments, a critical step in centrosome duplication and spindle formation. This is Gamma-tubulin complex component 5 (TUBGCP5) from Homo sapiens (Human).